Here is a 90-residue protein sequence, read N- to C-terminus: Probable Fe(2+)-trafficking protein (90 aa).

The protein belongs to the Fe(2+)-trafficking protein family.

Its function is as follows. Could be a mediator in iron transactions between iron acquisition and iron-requiring processes, such as synthesis and/or repair of Fe-S clusters in biosynthetic enzymes. In Coxiella burnetii (strain CbuK_Q154) (Coxiella burnetii (strain Q154)), this protein is Probable Fe(2+)-trafficking protein.